A 207-amino-acid polypeptide reads, in one-letter code: Holliday junction branch migration complex subunit RuvA (207 aa).

Positions 1 to 65 are domain I; the sequence is MYDYIRGTLT…ETEHLLYGFH (65 aa). The segment at 66–144 is domain II; the sequence is SREERECFRI…DLLPLDSRVE (79 aa). The tract at residues 145-150 is flexible linker; that stretch reads TSQTHT. A domain III region spans residues 150–207; that stretch reads TTSSCLEEGIQALAALGYSKIAAERMIAEAIKDLPEGSSLTDILPIALKKNFSGVNKD.

This sequence belongs to the RuvA family. In terms of assembly, homotetramer. Forms an RuvA(8)-RuvB(12)-Holliday junction (HJ) complex. HJ DNA is sandwiched between 2 RuvA tetramers; dsDNA enters through RuvA and exits via RuvB. An RuvB hexamer assembles on each DNA strand where it exits the tetramer. Each RuvB hexamer is contacted by two RuvA subunits (via domain III) on 2 adjacent RuvB subunits; this complex drives branch migration. In the full resolvosome a probable DNA-RuvA(4)-RuvB(12)-RuvC(2) complex forms which resolves the HJ.

It localises to the cytoplasm. The RuvA-RuvB-RuvC complex processes Holliday junction (HJ) DNA during genetic recombination and DNA repair, while the RuvA-RuvB complex plays an important role in the rescue of blocked DNA replication forks via replication fork reversal (RFR). RuvA specifically binds to HJ cruciform DNA, conferring on it an open structure. The RuvB hexamer acts as an ATP-dependent pump, pulling dsDNA into and through the RuvAB complex. HJ branch migration allows RuvC to scan DNA until it finds its consensus sequence, where it cleaves and resolves the cruciform DNA. This Chlamydia pneumoniae (Chlamydophila pneumoniae) protein is Holliday junction branch migration complex subunit RuvA.